We begin with the raw amino-acid sequence, 128 residues long: Flagellar basal body rod protein FlgB (128 aa).

It belongs to the flagella basal body rod proteins family. As to quaternary structure, the basal body constitutes a major portion of the flagellar organelle and consists of a number of rings mounted on a central rod. In Gram-negative bacteria, at least four rings, L, P, S and M are present, whereas Gram-positive bacteria lack the L and P rings. The rod consists of about 26 subunits of FlgG in the distal portion, and FlgB, FlgC and FlgF build up the proximal portion of the rod with about 6 subunits each. Rod assembly occurs by export via the flagellum-specific pathway of its constituent proteins and by their incorporation into the rod structure in the probable order of FlgB, FlgC, FlgF and FlgG. Another protein, FliE, also assembles onto the stable rod structure.

It is found in the bacterial flagellum basal body. Structural component of flagellum, the bacterial motility apparatus. Part of the rod structure of flagellar basal body. This is Flagellar basal body rod protein FlgB from Cereibacter sphaeroides (strain ATCC 17023 / DSM 158 / JCM 6121 / CCUG 31486 / LMG 2827 / NBRC 12203 / NCIMB 8253 / ATH 2.4.1.) (Rhodobacter sphaeroides).